The chain runs to 252 residues: Ribosomal RNA small subunit methyltransferase J (252 aa).

S-adenosyl-L-methionine contacts are provided by residues 101–102 (RD), 117–118 (ER), 153–154 (SS), and D171.

Belongs to the methyltransferase superfamily. RsmJ family.

It localises to the cytoplasm. The catalysed reaction is guanosine(1516) in 16S rRNA + S-adenosyl-L-methionine = N(2)-methylguanosine(1516) in 16S rRNA + S-adenosyl-L-homocysteine + H(+). In terms of biological role, specifically methylates the guanosine in position 1516 of 16S rRNA. The polypeptide is Ribosomal RNA small subunit methyltransferase J (Salmonella choleraesuis (strain SC-B67)).